The sequence spans 540 residues: Glucose-6-phosphate isomerase (540 aa).

Residue E346 is the Proton donor of the active site. Residues H377 and K505 contribute to the active site.

It belongs to the GPI family.

Its subcellular location is the cytoplasm. It catalyses the reaction alpha-D-glucose 6-phosphate = beta-D-fructose 6-phosphate. It participates in carbohydrate biosynthesis; gluconeogenesis. The protein operates within carbohydrate degradation; glycolysis; D-glyceraldehyde 3-phosphate and glycerone phosphate from D-glucose: step 2/4. In terms of biological role, catalyzes the reversible isomerization of glucose-6-phosphate to fructose-6-phosphate. The protein is Glucose-6-phosphate isomerase of Francisella tularensis subsp. holarctica (strain FTNF002-00 / FTA).